The sequence spans 309 residues: Uricase (309 aa).

N-acetylalanine is present on Ala-2. Catalysis depends on charge relay system residues Lys-16 and Thr-63. The urate site is built by Thr-63, Asp-64, Phe-165, Arg-182, Val-237, Gln-238, and Asn-264. His-266 serves as the catalytic Charge relay system. Positions 307-309 match the Microbody targeting signal motif; that stretch reads SKL.

It belongs to the uricase family.

The protein resides in the peroxisome. It catalyses the reaction urate + O2 + H2O = 5-hydroxyisourate + H2O2. It participates in purine metabolism; urate degradation; (S)-allantoin from urate: step 1/3. Its function is as follows. Catalyzes the oxidation of uric acid to 5-hydroxyisourate, which is further processed to form (S)-allantoin. The polypeptide is Uricase (Arabidopsis thaliana (Mouse-ear cress)).